A 212-amino-acid polypeptide reads, in one-letter code: Small ribosomal subunit protein uS5 (212 aa).

In terms of domain architecture, S5 DRBM spans 48–111 (LDDEVLDINM…EVAKLNIIDV (64 aa)).

The protein belongs to the universal ribosomal protein uS5 family. In terms of assembly, part of the 30S ribosomal subunit. Contacts protein S4.

With S4 and S12 plays an important role in translational accuracy. The polypeptide is Small ribosomal subunit protein uS5 (Halobacterium salinarum (strain ATCC 700922 / JCM 11081 / NRC-1) (Halobacterium halobium)).